A 199-amino-acid polypeptide reads, in one-letter code: Adenylyl-sulfate kinase (199 aa).

34-41 (GLSGSGKS) lines the ATP pocket. The active-site Phosphoserine intermediate is S108.

This sequence belongs to the APS kinase family.

The catalysed reaction is adenosine 5'-phosphosulfate + ATP = 3'-phosphoadenylyl sulfate + ADP + H(+). Its pathway is sulfur metabolism; hydrogen sulfide biosynthesis; sulfite from sulfate: step 2/3. Catalyzes the synthesis of activated sulfate. The sequence is that of Adenylyl-sulfate kinase from Oceanobacillus iheyensis (strain DSM 14371 / CIP 107618 / JCM 11309 / KCTC 3954 / HTE831).